A 152-amino-acid polypeptide reads, in one-letter code: Transcriptional regulator MraZ (152 aa).

SpoVT-AbrB domains follow at residues 5-52 (LNPI…THPQ) and 81-124 (ATEV…GKSQ).

This sequence belongs to the MraZ family. Forms oligomers.

The protein localises to the cytoplasm. It is found in the nucleoid. The polypeptide is Transcriptional regulator MraZ (Coxiella burnetii (strain Dugway 5J108-111)).